We begin with the raw amino-acid sequence, 304 residues long: Probable endonuclease 4 (304 aa).

His75, His115, Glu151, Asp185, His188, His221, Asp234, His236, and Glu266 together coordinate Zn(2+).

Belongs to the AP endonuclease 2 family. It depends on Zn(2+) as a cofactor.

The catalysed reaction is Endonucleolytic cleavage to 5'-phosphooligonucleotide end-products.. Functionally, endonuclease IV plays a role in DNA repair. It cleaves phosphodiester bonds at apurinic or apyrimidinic (AP) sites, generating a 3'-hydroxyl group and a 5'-terminal sugar phosphate. The protein is Probable endonuclease 4 of Ureaplasma urealyticum serovar 10 (strain ATCC 33699 / Western).